The sequence spans 901 residues: PGC-1 and ERR-induced regulator in muscle protein 1 (901 aa).

Disordered regions lie at residues 29-511, 564-671, and 731-752; these read QAGL…MPAS, SLEG…MGPG, and RHQE…APPP. The span at 100-112 shows a compositional bias: polar residues; that stretch reads GQQTPSTSAQSEA. The segment covering 157-178 has biased composition (low complexity); the sequence is GEPAGSPESPVHSAAPQRSPGS. Polar residues-rich tracts occupy residues 267–276, 347–379, 387–418, 426–457, and 465–484; these read LSTSVSTTEQ, DESQ…QSTP, EPQS…QSTP, and EPQS…STPT. Over residues 608–624 the composition is skewed to low complexity; the sequence is PSSEEPGSGEVSGPLSP.

It localises to the cytoplasm. Its subcellular location is the nucleus. Functionally, regulates the expression of selective PPARGC1A/B and ESRRA/B/G target genes with roles in glucose and lipid metabolism, energy transfer, contractile function, muscle mitochondrial biogenesis and oxidative capacity. Required for the efficient induction of MT-CO2, MT-CO3, COX4I1, TFB1M, TFB2M, POLRMT and SIRT3 by PPARGC1A. Positively regulates the PPARGC1A/ESRRG-induced expression of CKMT2, TNNI3 and SLC2A4 and negatively regulates the PPARGC1A/ESRRG-induced expression of PDK4. The polypeptide is PGC-1 and ERR-induced regulator in muscle protein 1 (PERM1) (Bos taurus (Bovine)).